Consider the following 332-residue polypeptide: Glycerol-3-phosphate dehydrogenase [NAD(P)+] (332 aa).

Residues Trp13, Lys34, and Lys108 each coordinate NADPH. 3 residues coordinate sn-glycerol 3-phosphate: Lys108, Gly136, and Ser138. An NADPH-binding site is contributed by Ala140. Sn-glycerol 3-phosphate-binding residues include Lys191, Asp244, Ser254, Arg255, and Asn256. Catalysis depends on Lys191, which acts as the Proton acceptor. Arg255 serves as a coordination point for NADPH. Residues Val279 and Glu281 each coordinate NADPH.

Belongs to the NAD-dependent glycerol-3-phosphate dehydrogenase family.

It localises to the cytoplasm. It carries out the reaction sn-glycerol 3-phosphate + NAD(+) = dihydroxyacetone phosphate + NADH + H(+). It catalyses the reaction sn-glycerol 3-phosphate + NADP(+) = dihydroxyacetone phosphate + NADPH + H(+). It functions in the pathway membrane lipid metabolism; glycerophospholipid metabolism. Functionally, catalyzes the reduction of the glycolytic intermediate dihydroxyacetone phosphate (DHAP) to sn-glycerol 3-phosphate (G3P), the key precursor for phospholipid synthesis. The sequence is that of Glycerol-3-phosphate dehydrogenase [NAD(P)+] from Francisella philomiragia subsp. philomiragia (strain ATCC 25017 / CCUG 19701 / FSC 153 / O#319-036).